A 110-amino-acid chain; its full sequence is UPF0122 protein GWCH70_1086 (110 aa).

Belongs to the UPF0122 family.

Might take part in the signal recognition particle (SRP) pathway. This is inferred from the conservation of its genetic proximity to ftsY/ffh. May be a regulatory protein. This Geobacillus sp. (strain WCH70) protein is UPF0122 protein GWCH70_1086.